A 224-amino-acid polypeptide reads, in one-letter code: Ribose-5-phosphate isomerase A (224 aa).

Residues 32–35 (TGST), 85–88 (DGAD), and 98–101 (KGGG) each bind substrate. Glutamate 107 serves as the catalytic Proton acceptor. Residue lysine 125 participates in substrate binding.

Belongs to the ribose 5-phosphate isomerase family. Homodimer.

The enzyme catalyses aldehydo-D-ribose 5-phosphate = D-ribulose 5-phosphate. The protein operates within carbohydrate degradation; pentose phosphate pathway; D-ribose 5-phosphate from D-ribulose 5-phosphate (non-oxidative stage): step 1/1. In terms of biological role, catalyzes the reversible conversion of ribose-5-phosphate to ribulose 5-phosphate. In Pseudomonas putida (strain ATCC 700007 / DSM 6899 / JCM 31910 / BCRC 17059 / LMG 24140 / F1), this protein is Ribose-5-phosphate isomerase A.